A 122-amino-acid polypeptide reads, in one-letter code: Large ribosomal subunit protein uL14 (122 aa).

This sequence belongs to the universal ribosomal protein uL14 family. As to quaternary structure, part of the 50S ribosomal subunit. Forms a cluster with proteins L3 and L19. In the 70S ribosome, L14 and L19 interact and together make contacts with the 16S rRNA in bridges B5 and B8.

In terms of biological role, binds to 23S rRNA. Forms part of two intersubunit bridges in the 70S ribosome. The protein is Large ribosomal subunit protein uL14 of Verminephrobacter eiseniae (strain EF01-2).